A 358-amino-acid polypeptide reads, in one-letter code: Uroporphyrinogen decarboxylase (358 aa).

Substrate contacts are provided by residues 29–33, Phe48, Asp79, Tyr155, Ser210, and His330; that span reads RQAGR.

This sequence belongs to the uroporphyrinogen decarboxylase family. As to quaternary structure, homodimer.

It localises to the cytoplasm. The catalysed reaction is uroporphyrinogen III + 4 H(+) = coproporphyrinogen III + 4 CO2. It functions in the pathway porphyrin-containing compound metabolism; protoporphyrin-IX biosynthesis; coproporphyrinogen-III from 5-aminolevulinate: step 4/4. Catalyzes the decarboxylation of four acetate groups of uroporphyrinogen-III to yield coproporphyrinogen-III. The polypeptide is Uroporphyrinogen decarboxylase (Bordetella parapertussis (strain 12822 / ATCC BAA-587 / NCTC 13253)).